The following is a 418-amino-acid chain: Voltage-gated ClC-type chloride channel ClcB (418 aa).

The next 10 helical transmembrane spans lie at 5–25 (LLIA…FRHA), 54–74 (LLTP…WQKF), 146–166 (LWIA…PLAG), 168–188 (LFIA…PVII), 222–242 (ALII…LTLM), 258–278 (WQLA…PAVW), 291–311 (APPL…AVLA), 316–336 (GAPG…GMLY), 352–372 (LLLG…APIM), and 380–400 (MTGE…ASVI).

This sequence belongs to the chloride channel (TC 2.A.49) family. ClcB subfamily.

The protein localises to the cell inner membrane. In terms of biological role, probably acts as an electrical shunt for an outwardly-directed proton pump that is linked to amino acid decarboxylation, as part of the extreme acid resistance (XAR) response. The polypeptide is Voltage-gated ClC-type chloride channel ClcB (Escherichia coli (strain ATCC 8739 / DSM 1576 / NBRC 3972 / NCIMB 8545 / WDCM 00012 / Crooks)).